The following is a 312-amino-acid chain: uncharacterized protein (312 aa).

Transmembrane regions (helical) follow at residues 4–24 (AIYLLILCIFGLFSVYFTYAE) and 286–306 (YLLSFIGIIIGFGIIGLAIYL).

Its subcellular location is the cell membrane. This is an uncharacterized protein from Methanocaldococcus jannaschii (strain ATCC 43067 / DSM 2661 / JAL-1 / JCM 10045 / NBRC 100440) (Methanococcus jannaschii).